Reading from the N-terminus, the 126-residue chain is Diadenosine hexaphosphate hydrolase (126 aa).

Positions 1–121 (MELGAGGVVF…EDLGLLEVAL (121 aa)) constitute a Nudix hydrolase domain. Substrate contacts are provided by residues 21–23 (DRM) and 30–32 (KGH). The short motif at 31 to 52 (GHPEPGESLEEAAVREVWEETG) is the Nudix box element. 2 residues coordinate Mg(2+): glutamate 46 and glutamate 50. Substrate-binding positions include 66 to 68 (YVN), arginine 74, and glutamate 112.

The protein belongs to the Nudix hydrolase family. Monomer. Requires Mg(2+) as cofactor.

The enzyme catalyses P(1),P(6)-bis(5'-adenosyl) hexaphosphate + H2O = 2 ATP + 2 H(+). It catalyses the reaction P(1),P(5)-bis(5'-adenosyl) pentaphosphate + H2O = ADP + ATP + 2 H(+). The catalysed reaction is P(1),P(4)-bis(5'-adenosyl) tetraphosphate + H2O = AMP + ATP + 2 H(+). With respect to regulation, strongly inhibited by fluoride ions. Its function is as follows. Specifically hydrolyzes (di)adenosine polyphosphates but not ATP or diadenosine triphosphate, generating ATP as the product. Diadenosine hexaphosphate (Ap6A) is the preferred substrate and hydrolysis yields 2 ATP. It is the only enzyme that symmetrically hydrolyzes Ap6A. It also hydrolyzes diadenosine pentaphosphate (Ap5A), diadenosine tetraphosphate (Ap4A) and adenosine tetraphosphate (p4A). The protein is Diadenosine hexaphosphate hydrolase of Thermus thermophilus.